The following is a 599-amino-acid chain: NADH-quinone oxidoreductase subunit C/D (599 aa).

An NADH dehydrogenase I subunit C region spans residues 1 to 189 (MTELMTQNSA…DPFVLTKQKE (189 aa)). Residues 213 to 599 (DFMFLNLGPN…IDFVMSDVDR (387 aa)) are NADH dehydrogenase I subunit D.

The protein in the N-terminal section; belongs to the complex I 30 kDa subunit family. In the C-terminal section; belongs to the complex I 49 kDa subunit family. In terms of assembly, NDH-1 is composed of 13 different subunits. Subunits NuoB, CD, E, F, and G constitute the peripheral sector of the complex.

The protein localises to the cell inner membrane. It catalyses the reaction a quinone + NADH + 5 H(+)(in) = a quinol + NAD(+) + 4 H(+)(out). Functionally, NDH-1 shuttles electrons from NADH, via FMN and iron-sulfur (Fe-S) centers, to quinones in the respiratory chain. The immediate electron acceptor for the enzyme in this species is believed to be ubiquinone. Couples the redox reaction to proton translocation (for every two electrons transferred, four hydrogen ions are translocated across the cytoplasmic membrane), and thus conserves the redox energy in a proton gradient. The chain is NADH-quinone oxidoreductase subunit C/D from Sodalis glossinidius (strain morsitans).